A 209-amino-acid chain; its full sequence is MKLRGLYAITDSQLLDDGRLLPYVEAALRGGARLLQYRDKSCDQARRLREAASLRELCERHGAQLIVNDDAELAARLGVGVHLGQTDGSLSAARALLGRQALVGATCHASLELAEQAVADGASYVAFGRFFNSSTKPGAPAASVELLDQARPRLHLPITAIGGISLDTAPGLIARGVDLIAVIHALFAAASAAEVERRARAFSALFETA.

4-amino-2-methyl-5-(diphosphooxymethyl)pyrimidine-binding positions include 36-40 and asparagine 68; that span reads QYRDK. Positions 69 and 87 each coordinate Mg(2+). Position 106 (threonine 106) interacts with 4-amino-2-methyl-5-(diphosphooxymethyl)pyrimidine. 133–135 contacts 2-[(2R,5Z)-2-carboxy-4-methylthiazol-5(2H)-ylidene]ethyl phosphate; the sequence is SST. Lysine 136 serves as a coordination point for 4-amino-2-methyl-5-(diphosphooxymethyl)pyrimidine. Glycine 163 serves as a coordination point for 2-[(2R,5Z)-2-carboxy-4-methylthiazol-5(2H)-ylidene]ethyl phosphate.

This sequence belongs to the thiamine-phosphate synthase family. It depends on Mg(2+) as a cofactor.

The catalysed reaction is 2-[(2R,5Z)-2-carboxy-4-methylthiazol-5(2H)-ylidene]ethyl phosphate + 4-amino-2-methyl-5-(diphosphooxymethyl)pyrimidine + 2 H(+) = thiamine phosphate + CO2 + diphosphate. It carries out the reaction 2-(2-carboxy-4-methylthiazol-5-yl)ethyl phosphate + 4-amino-2-methyl-5-(diphosphooxymethyl)pyrimidine + 2 H(+) = thiamine phosphate + CO2 + diphosphate. It catalyses the reaction 4-methyl-5-(2-phosphooxyethyl)-thiazole + 4-amino-2-methyl-5-(diphosphooxymethyl)pyrimidine + H(+) = thiamine phosphate + diphosphate. It participates in cofactor biosynthesis; thiamine diphosphate biosynthesis; thiamine phosphate from 4-amino-2-methyl-5-diphosphomethylpyrimidine and 4-methyl-5-(2-phosphoethyl)-thiazole: step 1/1. Its function is as follows. Condenses 4-methyl-5-(beta-hydroxyethyl)thiazole monophosphate (THZ-P) and 2-methyl-4-amino-5-hydroxymethyl pyrimidine pyrophosphate (HMP-PP) to form thiamine monophosphate (TMP). This Pseudomonas paraeruginosa (strain DSM 24068 / PA7) (Pseudomonas aeruginosa (strain PA7)) protein is Thiamine-phosphate synthase.